A 62-amino-acid chain; its full sequence is MTIAFQLAVFALIATSSILLISVPVVFASPDGWSSNKNIVFSGTSLWLGLVFLVGILNSLIS.

Helical transmembrane passes span 8 to 28 (AVFALIATSSILLISVPVVFA) and 41 to 61 (FSGTSLWLGLVFLVGILNSLI).

It belongs to the PsbZ family. In terms of assembly, PSII is composed of 1 copy each of membrane proteins PsbA, PsbB, PsbC, PsbD, PsbE, PsbF, PsbH, PsbI, PsbJ, PsbK, PsbL, PsbM, PsbT, PsbY, PsbZ, Psb30/Ycf12, at least 3 peripheral proteins of the oxygen-evolving complex and a large number of cofactors. It forms dimeric complexes.

The protein resides in the plastid. The protein localises to the chloroplast thylakoid membrane. Its function is as follows. May control the interaction of photosystem II (PSII) cores with the light-harvesting antenna, regulates electron flow through the 2 photosystem reaction centers. PSII is a light-driven water plastoquinone oxidoreductase, using light energy to abstract electrons from H(2)O, generating a proton gradient subsequently used for ATP formation. The polypeptide is Photosystem II reaction center protein Z (Spinacia oleracea (Spinach)).